We begin with the raw amino-acid sequence, 348 residues long: Outer membrane protein assembly factor BamC (348 aa).

An N-terminal signal peptide occupies residues 1–19 (MKYSHQLVIGSLAVFVLTA). Cys20 is lipidated: N-palmitoyl cysteine. Residue Cys20 is the site of S-diacylglycerol cysteine attachment.

This sequence belongs to the BamC family. In terms of assembly, part of the Bam complex.

It localises to the cell outer membrane. Part of the outer membrane protein assembly complex, which is involved in assembly and insertion of beta-barrel proteins into the outer membrane. This is Outer membrane protein assembly factor BamC from Vibrio atlanticus (strain LGP32) (Vibrio splendidus (strain Mel32)).